Here is a 305-residue protein sequence, read N- to C-terminus: Ribonuclease BN (305 aa).

Zn(2+) is bound by residues H64, H66, D68, H69, H141, D212, and H270. D68 serves as the catalytic Proton acceptor.

This sequence belongs to the RNase Z family. RNase BN subfamily. Homodimer. It depends on Zn(2+) as a cofactor.

Zinc phosphodiesterase, which has both exoribonuclease and endoribonuclease activities. The polypeptide is Ribonuclease BN (Escherichia coli O127:H6 (strain E2348/69 / EPEC)).